The chain runs to 125 residues: Small ribosomal subunit protein uS12 (125 aa).

A 3-methylthioaspartic acid modification is found at Asp89.

Belongs to the universal ribosomal protein uS12 family. In terms of assembly, part of the 30S ribosomal subunit. Contacts proteins S8 and S17. May interact with IF1 in the 30S initiation complex.

Its function is as follows. With S4 and S5 plays an important role in translational accuracy. Interacts with and stabilizes bases of the 16S rRNA that are involved in tRNA selection in the A site and with the mRNA backbone. Located at the interface of the 30S and 50S subunits, it traverses the body of the 30S subunit contacting proteins on the other side and probably holding the rRNA structure together. The combined cluster of proteins S8, S12 and S17 appears to hold together the shoulder and platform of the 30S subunit. This is Small ribosomal subunit protein uS12 from Acidovorax sp. (strain JS42).